The chain runs to 246 residues: CD99 antigen-like protein 2 (246 aa).

An N-terminal signal peptide occupies residues 1 to 25; the sequence is MVARLTTLLVCLVFSLATLVQRGYG. Residues 26-160 are Extracellular-facing; that stretch reads DFDDFNLEDA…PGSGAVTDPG (135 aa). Residues 43 to 156 form a disordered region; the sequence is KQSHFSTTTR…SQDDPGSGAV (114 aa). Low complexity-rich tracts occupy residues 49–58 and 71–81; these read TTTRRTGTTR and TTTTTKRPGTT. Residues 100 to 109 are compositionally biased toward basic and acidic residues; sequence DDRNDLDGPK. O-linked (Xyl...) (chondroitin sulfate) serine glycosylation occurs at S153. A helical membrane pass occupies residues 161-181; the sequence is TIAGLVSALAAALLGAVSGYL. The Cytoplasmic segment spans residues 182–246; the sequence is SYQHRKFCFS…EPLAPERPRI (65 aa). Residues 223 to 246 are disordered; the sequence is APPVTDSTQHSQPTEPLAPERPRI. Residues 227–236 show a composition bias toward polar residues; sequence TDSTQHSQPT.

Belongs to the CD99 family. Post-translationally, O-glycosylated. As to expression, expressed predominantly in the ventral medullary surface of the brain, moderate expression in the cerebral cortex and cerebellum. Low expression in lung and kidney. No expression in heart, stomach, intestine and skeletal muscle.

It is found in the cell membrane. The protein localises to the cell junction. Its subcellular location is the secreted. Plays a role in a late step of leukocyte extravasation helping cells to overcome the endothelial basement membrane. Acts at the same site as, but independently of, PECAM1. Homophilic adhesion molecule, but these interactions may not be required for cell aggregation. In Rattus norvegicus (Rat), this protein is CD99 antigen-like protein 2 (Cd99l2).